The following is a 1809-amino-acid chain: MTSNNQNNSSSHQHLHSPSKLTEFARNFEDKPESLFGRVVNKIQNVYNQSYNTVNDISSGSSSSSSTQPVQVVGKSQFFSDSQTSTAEIADVETSSQSSVRPQPPTTLSIRTNSETRGTSTSSNTAAEDSETSDRVETLPLPTSEANQGRTVSNVLKHISNIVATKNNNDLRNYKDTELQRFWMPDSKAKECYDCSQKFSTFRRKHHCRLCGQIFCSKCCNQVVPGMIIRCDGDLKVCNYCSKIVLTFLKSSSSEMGQDMQELQQHLSNKLEVQDSGSSLAKHPQMQRAPLPRKTSVGYQEERFSSHPTYTTLSIDDRKNILQQSNSLITLHEEMQRDLPAQNCGQRLIEFLNSNNKSANEVQAVAILNAMLAAGFLEPIVPDPEQMDFDSSLHYKFSKSSSSDTSRTMSPQFEANPHAEPQPPKSMDQSAEEKEKELENELENDRCYTTATSKLLASYCEHEEQLLAQMLRAHNLDQEWDKVLQMLCSTAANHFKPEHCSNDLMDIRNYVNFKKVPGGRRKDSKIVHGVAFSKNVAHKDMATHVPFPRILLLQCPIVYERIEGKFVTIETVLLQEKEYLRNVCARIMSFKPNVVLVHKNVAGIAQDLLRSYEVTLVLDVKLSVMERLSRTLQCDIVSSIESNITMPKLGYCNDFYIRNYNGKTLMFFEKLTNPRGYTCLLRGGSNAELTRVKRVASALLFARYNWRLEMSFLLNEFAQPLSPKPSIFDSKETSPKTETEAELRSKRPIILERKSEDKITTIVSENVSDFTDPLRASQAEALSTSPCAPPVVEALAVEPRYDNRFRTALSSTLLSVSPFLTFPLPYLETEQGRKCKLRKLFPAELYFSKQWSRTGLERPDSMGDGEAGKSEPGNKENQMQLLPAHDFVLMKITAPASSRDIQSKLAEFRSFGGRLPKGKAPMLRPKKKNAEVIQRPQKVSEEQLYKDALDPQNHQRLPVLFCSFHYNPKGVSSFCKLPMLLDMKFYGQYDIMLEQFLQRYCCLFNSMCPSCNLPMLGHVRRYVHSLGCVHVYLTEDLTRSDPTRIYFTSWCSICNATTPTIPLSDAAKCLSLAKYLEMRFHGHAYKRRPPSTDAEQGGTVCEHSLHRDYVHHFSFRGVGAKFQYTPVEVWETDLPSLTVQLDLPQPFQSAQVQEEIKNFSIKGHEVYNRIHERIADLATEEENSPLVQHLKTMLTHDQFIFKQKIEIVHTLLTDNRATAYDTSDALAMARRALAESIELWGPRLQEIEKLTAKQAHHIDSGTICTEELRPEQVQTADSSKVTTSSLPKENDPLECPSEDTETGASNSQTVLDKNFSIDQMLASTVNVYSDKKSIRKILTQLLPSGNQVNPLQSPFPAQDHLTLPLGSIPIHVRETDLSSVIAYSLTSMDYQKAIDEAEANSNAAHSSPQLKRKIPLAESVSDAEDSPSLSRTSSNTSAAPNASVPSPATAASESEEKSKERIKQPPSPHITLAFQDHSCQFQCKIYFAREFDAMRSKSLKPPKLDKSLYRRLEKSKMREELRISQSRTGSEMELVRKPSDVGAPRTTEDDSNQEEDARIALARSLCKSVQWEARGGKSGSRFCKTLDDRFVLKEMNSRDMTIFEPFAPKYFEYIDRCQQQQQPTLLAKIFGVFRVSVKKKDSFVERSVMVMENLFYGCNIENKFDLKGSERNRLVDPSNQQGEIVLLDENLVQMSWSKPLYVLSHSKTVLRDAIQRDSSFLEKNLVMDYSLLVGLDKKNGVLVLGIIDYIRTFTLDKRVESIIKGSGILGGKGKDPTVVNPERYKQRFIDAMDRYFLTVPDRWEGLSKV.

The span at 1–12 shows a compositional bias: low complexity; sequence MTSNNQNNSSSH. Disordered stretches follow at residues 1–20 and 84–146; these read MTSN…SPSK and TSTA…TSEA. Residues 84 to 127 are compositionally biased toward polar residues; that stretch reads TSTAEIADVETSSQSSVRPQPPTTLSIRTNSETRGTSTSSNTAA. The segment at 186-246 adopts an FYVE-type zinc-finger fold; it reads DSKAKECYDC…VCNYCSKIVL (61 aa). Zn(2+) contacts are provided by Cys-192, Cys-195, Cys-208, Cys-211, Cys-216, Cys-219, Cys-238, and Cys-241. Disordered regions lie at residues 274–300 and 399–444; these read QDSG…VGYQ and KSSS…ELEN. Positions 323-399 constitute a DEP domain; the sequence is QQSNSLITLH…DSSLHYKFSK (77 aa). Residues 399-410 are compositionally biased toward low complexity; it reads KSSSSDTSRTMS. Residues 431–444 show a composition bias toward basic and acidic residues; sequence AEEKEKELENELEN. The residue at position 755 (Ser-755) is a Phosphoserine. Thr-760 carries the post-translational modification Phosphothreonine. The segment covering 856–874 has biased composition (basic and acidic residues); the sequence is LERPDSMGDGEAGKSEPGN. Disordered regions lie at residues 856 to 876, 1269 to 1307, 1399 to 1465, and 1521 to 1554; these read LERP…GNKE, RPEQ…ASNS, ANSN…IKQP, and LRIS…SNQE. Over residues 1272–1287 the composition is skewed to polar residues; it reads QVQTADSSKVTTSSLP. The span at 1426-1452 shows a compositional bias: low complexity; that stretch reads SPSLSRTSSNTSAAPNASVPSPATAAS. Residues 1454 to 1463 show a composition bias toward basic and acidic residues; that stretch reads SEEKSKERIK. The 324-residue stretch at 1473 to 1796 folds into the PIPK domain; that stretch reads AFQDHSCQFQ…RFIDAMDRYF (324 aa). Phosphoserine is present on Ser-1530. The segment at 1552-1809 is catalytic; sequence NQEEDARIAL…PDRWEGLSKV (258 aa).

Requires Zn(2+) as cofactor.

It localises to the endosome membrane. The enzyme catalyses a 1,2-diacyl-sn-glycero-3-phospho-(1D-myo-inositol-3-phosphate) + ATP = a 1,2-diacyl-sn-glycero-3-phospho-(1D-myo-inositol-3,5-bisphosphate) + ADP + H(+). Regulates both the synthesis and turnover of phosphatidylinositol 3,5-bisphosphate (1,2-diacyl-sn-glycero-3-phospho-(1D-myo-inositol-3,5-bisphosphate) or PtdIns(3,5)P2). Catalyzes the phosphorylation of phosphatidylinositol 3-phosphate (1,2-diacyl-sn-glycero-3-phospho-(1D-myo-inositol-3-phosphate)) on the fifth hydroxyl of the myo-inositol ring, to form PtdIns(3,5)P2. Required for endocytic-vacuolar pathway and nuclear migration. Has a role at a late stage in endosome-related membrane trafficking, at a point when signal termination has occurred. Is not required for receptor silencing. In Drosophila melanogaster (Fruit fly), this protein is Putative 1-phosphatidylinositol 3-phosphate 5-kinase (fab1).